A 428-amino-acid polypeptide reads, in one-letter code: Putative gustatory receptor 2a (428 aa).

Residues 1–40 lie on the Cytoplasmic side of the membrane; the sequence is MDTLRALEPLHRACQVCNLWPWRLAPPPDSEGILLRRSRW. A helical transmembrane segment spans residues 41–61; the sequence is LELYGWTVLIAATSFTVYGLF. Residues 62–145 lie on the Extracellular side of the membrane; it reads QESSVEEKQD…INMRRQTSRR (84 aa). A helical transmembrane segment spans residues 146–166; it reads AVWILWGYAVSQLLILGAKLL. Topologically, residues 167 to 173 are cytoplasmic; sequence SRGDRFP. Residues 174 to 194 traverse the membrane as a helical segment; it reads IYWISYLLPLLVCGLRYFQIF. The N-linked (GlcNAc...) asparagine glycan is linked to Asn195. Over 195–250 the chain is Extracellular; that stretch reads NATQLVRQRLDVLLVALQQLQLHQKGPAVDTVLEEQEDLEEAAMDRLIAVRLVYQR. A helical transmembrane segment spans residues 251-271; sequence VWALVALLNRCYGLSMLMQVG. Over 272 to 300 the chain is Cytoplasmic; it reads NDFLAITSNCYWMFLNFRQSAASPFDILQ. The chain crosses the membrane as a helical span at residues 301 to 321; that stretch reads IVASGVWSAPHLGNVLVLSLL. Topologically, residues 322 to 349 are extracellular; it reads CDRTAQCASRLALCLHQVSVDLRNESHN. An N-linked (GlcNAc...) asparagine glycan is attached at Asn345. A helical membrane pass occupies residues 350-370; sequence ALVGTLVRYCAPLIILVPLQI. The Cytoplasmic portion of the chain corresponds to 371 to 395; it reads TQFSLQLLHQRLHFSAAGFFNVDCT. The chain crosses the membrane as a helical span at residues 396-416; that stretch reads LLYTIVGATTTYLIILIQFHM. Over 417 to 428 the chain is Extracellular; sequence SESTIGSDSNGQ.

It belongs to the insect chemoreceptor superfamily. Gustatory receptor (GR) family. Gr2a subfamily. As to expression, expressed in neurons of the terminal external chemosensory organ, the dorsal external chemosensory organ, as well as in the dorsal pharyngeal sense organ of larvae.

It is found in the cell membrane. In terms of biological role, probable gustatory receptor which mediates acceptance or avoidance behavior, depending on its not yet determined substrates. The chain is Putative gustatory receptor 2a (Gr2a) from Drosophila melanogaster (Fruit fly).